Here is a 257-residue protein sequence, read N- to C-terminus: Ribonuclease PH (257 aa).

Residues Arg-86 and 124-126 each bind phosphate; that span reads GTR.

Belongs to the RNase PH family. Homohexameric ring arranged as a trimer of dimers.

It carries out the reaction tRNA(n+1) + phosphate = tRNA(n) + a ribonucleoside 5'-diphosphate. Its function is as follows. Phosphorolytic 3'-5' exoribonuclease that plays an important role in tRNA 3'-end maturation. Removes nucleotide residues following the 3'-CCA terminus of tRNAs; can also add nucleotides to the ends of RNA molecules by using nucleoside diphosphates as substrates, but this may not be physiologically important. Probably plays a role in initiation of 16S rRNA degradation (leading to ribosome degradation) during starvation. The protein is Ribonuclease PH of Halalkalibacterium halodurans (strain ATCC BAA-125 / DSM 18197 / FERM 7344 / JCM 9153 / C-125) (Bacillus halodurans).